Reading from the N-terminus, the 138-residue chain is Basic phospholipase A2 homolog ammodytin L (138 aa).

An N-terminal signal peptide occupies residues 1–16 (MRILWIVAVCLIGVEG). Intrachain disulfides connect cysteine 42–cysteine 131, cysteine 44–cysteine 60, cysteine 59–cysteine 111, cysteine 65–cysteine 138, cysteine 66–cysteine 104, cysteine 73–cysteine 97, and cysteine 91–cysteine 102. An important for membrane-damaging activities in eukaryotes and bacteria; heparin-binding region spans residues 121–133 (KKYKVYLRFKCKG).

This sequence belongs to the phospholipase A2 family. Group II subfamily. S49 sub-subfamily. In terms of tissue distribution, expressed by the venom gland.

Its subcellular location is the secreted. Snake venom phospholipase A2 homolog that lacks enzymatic activity. Is very active in inducing myonecrosis in vivo and shows a potent calcium-independent membrane-damaging activity in vitro, most probably by binding and incorporating in the membrane. Also acts as a presynaptic neurotoxin. A model of myotoxic mechanism has been proposed: an apo Lys49-PLA2 is activated by the entrance of a hydrophobic molecule (e.g. fatty acid) at the hydrophobic channel of the protein leading to a reorientation of a monomer. This reorientation causes a transition between 'inactive' to 'active' states, causing alignment of C-terminal and membrane-docking sites (MDoS) side-by-side and putting the membrane-disruption sites (MDiS) in the same plane, exposed to solvent and in a symmetric position for both monomers. The MDoS region stabilizes the toxin on membrane by the interaction of charged residues with phospholipid head groups. Subsequently, the MDiS region destabilizes the membrane with penetration of hydrophobic residues. This insertion causes a disorganization of the membrane, allowing an uncontrolled influx of ions (i.e. calcium and sodium), and eventually triggering irreversible intracellular alterations and cell death. The protein is Basic phospholipase A2 homolog ammodytin L of Vipera ammodytes ammodytes (Western sand viper).